The chain runs to 137 residues: Histone H2B (137 aa).

Over residues 1-10 the composition is skewed to basic and acidic residues; that stretch reads MPPKAADKKP. The interval 1–45 is disordered; the sequence is MPPKAADKKPANKAPATASKAPEKKDAGKKTAASGEKKKRTKARK. N6-acetyllysine; alternate occurs at positions 8 and 9. Residues lysine 8 and lysine 9 each participate in a glycyl lysine isopeptide (Lys-Gly) (interchain with G-Cter in SUMO); alternate cross-link. Lysine 13 is modified (N6-acetyllysine). Position 24 is an N6-acetyllysine; alternate (lysine 24). Lysine 24 is covalently cross-linked (Glycyl lysine isopeptide (Lys-Gly) (interchain with G-Cter in SUMO); alternate). Residue lysine 25 forms a Glycyl lysine isopeptide (Lys-Gly) (interchain with G-Cter in SUMO) linkage. Lysine 131 is covalently cross-linked (Glycyl lysine isopeptide (Lys-Gly) (interchain with G-Cter in ubiquitin)).

The protein belongs to the histone H2B family. In terms of assembly, the nucleosome is a histone octamer containing two molecules each of H2A, H2B, H3 and H4 assembled in one H3-H4 heterotetramer and two H2A-H2B heterodimers. The octamer wraps approximately 147 bp of DNA. Post-translationally, monoubiquitinated to form H2BK123ub1. H2BK123ub1 gives a specific tag for epigenetic transcriptional activation and is also prerequisite for H3K4me and H3K79me formation. H2BK123ub1 also modulates the formation of double-strand breaks during meiosis and is a prerequisite for DNA-damage checkpoint activation. In terms of processing, acetylated by GCN5 to form H2BK11ac and H2BK16ac. H2BK16ac can also be formed by ESA1. Acetylation of N-terminal lysines and particularly formation of H2BK11acK16ac has a positive effect on transcription. Sumoylation to form H2BK6su or H2BK7su, and probably also H2BK16su or H2BK17su, occurs preferentially near the telomeres and represses gene transcription.

It is found in the nucleus. The protein localises to the chromosome. Core component of nucleosome. Nucleosomes wrap and compact DNA into chromatin, limiting DNA accessibility to the cellular machineries which require DNA as a template. Histones thereby play a central role in transcription regulation, DNA repair, DNA replication and chromosomal stability. DNA accessibility is regulated via a complex set of post-translational modifications of histones, also called histone code, and nucleosome remodeling. The sequence is that of Histone H2B (HTB1) from Podospora anserina (Pleurage anserina).